A 75-amino-acid polypeptide reads, in one-letter code: Small ribosomal subunit protein bS18 (75 aa).

It belongs to the bacterial ribosomal protein bS18 family. In terms of assembly, part of the 30S ribosomal subunit. Forms a tight heterodimer with protein bS6.

Binds as a heterodimer with protein bS6 to the central domain of the 16S rRNA, where it helps stabilize the platform of the 30S subunit. The sequence is that of Small ribosomal subunit protein bS18 from Ruegeria sp. (strain TM1040) (Silicibacter sp.).